Consider the following 110-residue polypeptide: Small nuclear ribonucleoprotein Sm D2 (110 aa).

Residues 31–110 (MSLINDAMVT…VIVVLKTPVE (80 aa)) form the Sm domain.

The protein belongs to the snRNP core protein family. Component of the Sm core complex, present in spliceosomal snRNP U1, U2, U4/U6 and U5. The core complex contains SMB1, SMD1, SMD2, SMD3, SME1, SMX3 and SMX2 (Sm proteins B, D1, D2, D3, E, F and G, respectively), and is probably a heptameric ring structure. Belongs to the CWC complex (or CEF1-associated complex), a spliceosome sub-complex reminiscent of a late-stage spliceosome composed of the U2, U5 and U6 snRNAs and at least BUD13, BUD31, BRR2, CDC40, CEF1, CLF1, CUS1, CWC2, CWC15, CWC21, CWC22, CWC23, CWC24, CWC25, CWC27, ECM2, HSH155, IST3, ISY1, LEA1, MSL1, NTC20, PRP8, PRP9, PRP11, PRP19, PRP21, PRP22, PRP45, PRP46, SLU7, SMB1, SMD1, SMD2, SMD3, SMX2, SMX3, SNT309, SNU114, SPP2, SYF1, SYF2, RSE1 and YJU2. Component of the U4/U6-U5 tri-snRNP complex composed of the U4, U6 and U5 snRNAs and at least PRP3, PRP4, PRP6, PRP8, PRP18, PRP31, PRP38, SNU13, SNU23, SNU66, SNU114, SPP381, SMB1, SMD1, SMD2, SMD3, SMX2, SMX3, LSM2, LSM3, LSM4, LSM5, LSM6, LSM7, LSM8, BRR2 and DIB1.

It is found in the nucleus. The protein resides in the cytoplasm. Its subcellular location is the cytosol. Functionally, plays a role in pre-mRNA splicing as a core component of the spliceosomal U1, U2, U4 and U5 small nuclear ribonucleoproteins (snRNPs), the building blocks of the spliceosome. The chain is Small nuclear ribonucleoprotein Sm D2 (SMD2) from Saccharomyces cerevisiae (strain ATCC 204508 / S288c) (Baker's yeast).